Reading from the N-terminus, the 306-residue chain is Dioxygenase FrzG (306 aa).

Fe cation-binding residues include His-132, Asp-134, and His-216.

It belongs to the PhyH family. As to quaternary structure, homodimer. The cofactor is Fe cation.

It catalyses the reaction (1S,4S)-4-[(4-methoxyphenyl)methyl]-2-methyl-2,5-diazaspiro[bicyclo[3.2.1]octane-6,1'-cyclohexan]-4'-one + 2-oxoglutarate + O2 = (2S)-3-(4-methoxyphenyl)-2-[(3S)-3-(methylamino)-8-oxo-1-azaspiro[4.5]decan-1-yl]propanal + succinate + CO2. It participates in secondary metabolite biosynthesis. Functionally, dioxygenase; part of the gene cluster that mediates the biosynthesis of the alkaloid (-)-FR901483, a potent immunosuppressant that shows efficacy in animal models and a probable inhibitor of purine nucleotide biosynthesis by targeting phosphoribosylpyrophosphate amidotransferase (PPAT). Within the pathway, FrzG cleaves the C9-N10' bond to yield a conjugated iminium. FrzG is also able to catalyze the dehydrogenation between C7 and C8 which leads to a shunt product. The biosynthesis of (-)-FR901483 starts with the condensation of two L-tyrosines to yield (S,S)-dityrosyl-piperazine. This process occurs in 3 steps with the non-canonical nonribosomal peptide synthetase FrzA catalyzing the reduction of L-tyrosine into L-tyrosinal, the spontaneous condensation of 2 L-tyrosinal units, and the subsequent reduction by the NmrA-like family domain-containing oxidoreductase FrzB. The cytochrome P450 monooxygenase FrzC then performs coupling between N10 and C1' to morph the piperazine into a 1,4-diazabicyclo[3.2.1]octane spiro-fused to a 2,5-cyclohexadienone. The dienone portion is further reduced to cyclohexanone by the flavin-dependent reductase FrzD. The methyltranserases (MTs) FrzE and FrzF are then involved in the methylation at the C10' amine and the C4 phenolic oxygen, respectively. The order of the two MTs appear to be interchangeable. Cleavage of the C9-N10' bond by the dioxygenase FrzG then leads to formation of a conjugated iminium. In addition to the oxidation of C9, an additional dehydrogenation between C7 and C8 can occur to give a likely shunt product. The next biosynthetic step is the intramolecular aldol condensation catalyzed by the newly identified aldolase FrzH to yield an aza-tricyclic product with the formation of a C9-C3' bond. The short-chain dehydrogenase/reductase FrzI then produces dephospho-(-)-FR901483 that is phosphorylated at C4'-OH into (-)-FR901483 by the phosphotransferase FrzJ. The polypeptide is Dioxygenase FrzG (Cladobotryum sp).